We begin with the raw amino-acid sequence, 561 residues long: Putative pectinesterase/pectinesterase inhibitor 24 (561 aa).

Residues 26-46 (IAIIAVSLVILAGIVIGAVFG) form a helical membrane-spanning segment. The segment at 64-211 (DSISVSVKAV…TELTSNALAI (148 aa)) is pectinesterase inhibitor 24. N-linked (GlcNAc...) asparagine glycosylation is found at N92, N130, N148, and N200. Positions 255–548 (DIVVAKDGSG…TVKPFIDGGR (294 aa)) are pectinesterase 24. Substrate contacts are provided by T330 and Q360. D383 (proton donor; for pectinesterase activity) is an active-site residue. Residues C397 and C417 are joined by a disulfide bond. D404 (nucleophile; for pectinesterase activity) is an active-site residue. The substrate site is built by R468 and W470. Residue N472 is glycosylated (N-linked (GlcNAc...) asparagine).

It in the N-terminal section; belongs to the PMEI family. This sequence in the C-terminal section; belongs to the pectinesterase family.

The protein localises to the membrane. It catalyses the reaction [(1-&gt;4)-alpha-D-galacturonosyl methyl ester](n) + n H2O = [(1-&gt;4)-alpha-D-galacturonosyl](n) + n methanol + n H(+). It participates in glycan metabolism; pectin degradation; 2-dehydro-3-deoxy-D-gluconate from pectin: step 1/5. Functionally, acts in the modification of cell walls via demethylesterification of cell wall pectin. This Arabidopsis thaliana (Mouse-ear cress) protein is Putative pectinesterase/pectinesterase inhibitor 24 (PME24).